The following is a 343-amino-acid chain: Dihydroorotase (343 aa).

Zn(2+) is bound by residues His14 and His16. Residues 16–18 and Asn42 each bind substrate; that span reads HLR. The Zn(2+) site is built by Lys97, His136, His170, and Asp242. Lys97 carries the N6-carboxylysine modification. His136 contributes to the substrate binding site. The active site involves Asp242. Positions 246 and 258 each coordinate substrate.

It belongs to the metallo-dependent hydrolases superfamily. DHOase family. Class II DHOase subfamily. Homodimer. Zn(2+) serves as cofactor.

The catalysed reaction is (S)-dihydroorotate + H2O = N-carbamoyl-L-aspartate + H(+). The protein operates within pyrimidine metabolism; UMP biosynthesis via de novo pathway; (S)-dihydroorotate from bicarbonate: step 3/3. Functionally, catalyzes the reversible cyclization of carbamoyl aspartate to dihydroorotate. This chain is Dihydroorotase, found in Helicobacter hepaticus (strain ATCC 51449 / 3B1).